The following is an 87-amino-acid chain: Cell division topological specificity factor (87 aa).

This sequence belongs to the MinE family.

Prevents the cell division inhibition by proteins MinC and MinD at internal division sites while permitting inhibition at polar sites. This ensures cell division at the proper site by restricting the formation of a division septum at the midpoint of the long axis of the cell. The polypeptide is Cell division topological specificity factor (Aliivibrio fischeri (strain ATCC 700601 / ES114) (Vibrio fischeri)).